We begin with the raw amino-acid sequence, 131 residues long: Cruxhalorhodopsin-1 (131 aa).

A helical membrane pass occupies residues 1 to 11; it reads PMILLALGLLA. The Cytoplasmic portion of the chain corresponds to 12–14; it reads DTD. Residues 15 to 38 traverse the membrane as a helical segment; sequence IASLFTAITMDIGMCVTGLAAALI. Topologically, residues 39 to 41 are extracellular; that stretch reads TSS. The chain crosses the membrane as a helical span at residues 42-64; it reads HLLRWVFYGISCAFFVAVLYVLL. Topologically, residues 65–76 are cytoplasmic; the sequence is VQWPADAEAAGT. The chain crosses the membrane as a helical span at residues 77 to 100; the sequence is SEIFGTLKILTVVLWLGYPILWAL. Topologically, residues 101–109 are extracellular; the sequence is GSEGVALLS. A helical transmembrane segment spans residues 110–131; sequence VGVTSWGYSGLDILAKYVFAFI. Lysine 125 carries the post-translational modification N6-(retinylidene)lysine.

It belongs to the archaeal/bacterial/fungal opsin family.

The protein resides in the cell membrane. Its function is as follows. Light-driven chloride pump. The polypeptide is Cruxhalorhodopsin-1 (choP1) (Haloarcula argentinensis).